The chain runs to 341 residues: Phosphate acyltransferase (341 aa).

Belongs to the PlsX family. In terms of assembly, homodimer. Probably interacts with PlsY.

It localises to the cytoplasm. The enzyme catalyses a fatty acyl-[ACP] + phosphate = an acyl phosphate + holo-[ACP]. Its pathway is lipid metabolism; phospholipid metabolism. Its function is as follows. Catalyzes the reversible formation of acyl-phosphate (acyl-PO(4)) from acyl-[acyl-carrier-protein] (acyl-ACP). This enzyme utilizes acyl-ACP as fatty acyl donor, but not acyl-CoA. The polypeptide is Phosphate acyltransferase (Photobacterium profundum (strain SS9)).